A 167-amino-acid chain; its full sequence is Novel acetylcholine receptor chaperone (167 aa).

Residues Met-1–Arg-5 are Cytoplasmic-facing. A helical membrane pass occupies residues Thr-6–Ile-26. The Lumenal portion of the chain corresponds to Lys-27–Ser-61. The tract at residues Ala-43–Leu-54 is interaction with NGFR. Residues Ile-62–Val-82 form a helical membrane-spanning segment. The Cytoplasmic segment spans residues Pro-83–Asp-88. A helical transmembrane segment spans residues Val-89–Gly-109. Residues Asp-110–Arg-114 are Lumenal-facing. Residues Tyr-115–Ala-132 traverse the membrane as a helical segment. The Cytoplasmic portion of the chain corresponds to Arg-133 to Ser-167. Over residues Pro-135 to Leu-145 the composition is skewed to basic and acidic residues. Residues Pro-135–Ser-167 are disordered.

This sequence belongs to the DoxX family. As to quaternary structure, may interact with NGFR. Interacts with RPN1, RPN2 and CANX. In terms of tissue distribution, brain (at protein level). Expressed in the spinal cord dorsal horn (at protein level).

The protein resides in the peroxisome membrane. It is found in the cytoplasmic vesicle. The protein localises to the endoplasmic reticulum membrane. Functionally, molecular chaperone which mediates the proper assembly and functional expression of the nicotinic acetylcholine receptors (nAChRs) throughout the brain. Essential for the proper folding, assembly, function and surface trafficking of alpha-7 (CHRNA7), alpha-4-beta-2, alpha-3-beta-2 and alpha-3-beta-4 receptors. Stably associates with ribophorin-1 (RPN1) and ribophorin-2 (RPN2) (components of the oligosaccharyl transferase (OST) complex) and with calnexin (CANX), both of which are critical for NACHO-mediated effects on CHRNA7 assembly and function. Facilitates the proper folding and assembly of alpha-6-beta-2 and alpha-6-beta-2-beta-3 receptors and acts at early stages of the nAChRs subunit assembly. Promotes the expression of the alpha-4(2):beta-2(3) stoichiometric form over the alpha-4(3):beta-2(2) form. This Mus musculus (Mouse) protein is Novel acetylcholine receptor chaperone.